The chain runs to 213 residues: Thymidylate kinase (213 aa).

10-17 (GLEGAGKT) provides a ligand contact to ATP.

Belongs to the thymidylate kinase family.

It carries out the reaction dTMP + ATP = dTDP + ADP. Its function is as follows. Phosphorylation of dTMP to form dTDP in both de novo and salvage pathways of dTTP synthesis. The polypeptide is Thymidylate kinase (Salmonella dublin (strain CT_02021853)).